The sequence spans 666 residues: Endogenous retrovirus group K member 9 Gag polyprotein (666 aa).

Gly-2 carries the N-myristoyl glycine lipid modification. A disordered region spans residues 165–264; the sequence is GKGPELVGPS…APPSRQGSEL (100 aa). Residues 232–247 are compositionally biased toward pro residues; that stretch reads GMPPAPQGRAPYPQPP. 2 CCHC-type zinc fingers span residues 544–561 and 580–597; these read GKCYNCGQIGHLKKNCPV and DLCPRCKKGKHWASQCRS. The disordered stretch occupies residues 598–641; that stretch reads KFDKNGQPLSGNEQRGQPQAPQQTGAFPIQPFVPQGFQGQQPPL. Positions 604 to 622 are enriched in polar residues; sequence QPLSGNEQRGQPQAPQQTG. The span at 624 to 640 shows a compositional bias: low complexity; the sequence is FPIQPFVPQGFQGQQPP.

The protein belongs to the beta type-B retroviral Gag protein family. HERV class-II K(HML-2) gag subfamily. In terms of processing, myristoylation is essential for retroviral assembly. Alteration of the glycine residue leads to a block in the budding of particles and an accumulation of Gag inside the cell. Post-translationally, specific enzymatic cleavages may yield mature proteins.

The protein resides in the cell membrane. The products of the Gag polyproteins of infectious retroviruses perform highly complex orchestrated tasks during the assembly, budding, maturation, and infection stages of the viral replication cycle. During viral assembly, the proteins form membrane associations and self-associations that ultimately result in budding of an immature virion from the infected cell. Gag precursors also function during viral assembly to selectively bind and package two plus strands of genomic RNA. Endogenous Gag proteins may have kept, lost or modified their original function during evolution. The sequence is that of Endogenous retrovirus group K member 9 Gag polyprotein (ERVK-9) from Homo sapiens (Human).